Consider the following 194-residue polypeptide: MTAARNIPTFDDLPLPADTANLRHGANLHDALLALLPLVGVWRGEGEGRGPHGDYRFGQQIVVSHDGGDYLNWEARSWRLDEDGQYEEPGLRETGFWRFVSDPEDDPSESQAIELLLAHSAGYVELFYGRPLTQSSWELVTDALARSRSGVLVGGAKRLYGIIEGGDLAYVEERVDADGGLVPHLSARLSRYAG.

A GXWXGXG motif is present at residues 40 to 46; sequence GVWRGEG. Positions 157 and 184 each coordinate heme b.

This sequence belongs to the nitrobindin family. As to quaternary structure, homodimer. Requires heme b as cofactor.

It catalyses the reaction peroxynitrite = nitrate. It participates in nitrogen metabolism. In terms of biological role, heme-binding protein able to scavenge peroxynitrite and to protect free L-tyrosine against peroxynitrite-mediated nitration, by acting as a peroxynitrite isomerase that converts peroxynitrite to nitrate. Therefore, this protein likely plays a role in peroxynitrite sensing and in the detoxification of reactive nitrogen and oxygen species (RNS and ROS, respectively). Is able to bind nitric oxide (NO) in vitro, but may act as a sensor of peroxynitrite levels in vivo. The sequence is that of Peroxynitrite isomerase 1 from Mycobacterium ulcerans (strain Agy99).